A 139-amino-acid polypeptide reads, in one-letter code: Cuticle protein 76 (139 aa).

A run of 6 repeats spans residues 7–10 (AAPA), 68–71 (AAPA), 75–78 (AAPV), 93–95 (AAP), 105–108 (AAPA), and 121–124 (AAPA).

In terms of biological role, component of the cuticle of migratory locust which contains more than 100 different structural proteins. The protein is Cuticle protein 76 of Locusta migratoria (Migratory locust).